Here is a 538-residue protein sequence, read N- to C-terminus: MPNSSYYDDDGGSFEAASYPFQFDGSRRFPNDLHPTMFEGEESNQNGGSVLIDQAFQDIQNPNVNSNMHLENQFQHFHEPNKESGAFGSYKNDDVAKEIESSKNQETDAKSEQAPFTEDASSSNYAHHRSADSQTKSALPPNVPASSSPLPPMSIAMNIARKRSWPASLAIERDNTADALFSTEDGREEQFNLEGVKTKSGRKVHRPNHFDPLVKLPTRRRGPGRRPVVALAMKCSVCQRLQSPPKNRIVFCDGCNTPFHQLCHEPYISDELLDSPNGEWFCDDCIRRKKQAPLVTGTTARELNLSSEEKKSYLLSLPISQLVDILLFCEQLHPDIPFYSPKTSTIVQELQSKRSAFTATMNEPVTGDQYLSLNNGTESQSKTTKHSTSLPSTEPVEVDKQYMESEKIPTIDEYLQEYSNEDEIVLQVLESFPAAVSFSTITNTIQAKYSNRKIKNSNITRSLNRLVRKNRVLRDARGSSYELNRTFDADRPSVRPDISITGPIPIDWMLYTPHTEDLTENFCTYYMFDETPIVLSSI.

3 disordered regions span residues 28–47, 98–150, and 198–222; these read RFPN…NQNG, EIES…SSPL, and TKSG…RRRG. Over residues 98–111 the composition is skewed to basic and acidic residues; it reads EIESSKNQETDAKS. A PHD-type zinc finger spans residues 232 to 288; that stretch reads AMKCSVCQRLQSPPKNRIVFCDGCNTPFHQLCHEPYISDELLDSPNGEWFCDDCIRR. Residues 367–392 are compositionally biased toward polar residues; it reads GDQYLSLNNGTESQSKTTKHSTSLPS. The interval 367 to 396 is disordered; it reads GDQYLSLNNGTESQSKTTKHSTSLPSTEPV.

In terms of assembly, component of the SWM histone demethylase complex composed of at least lsd1, lsd2, phf1 and phf2.

It localises to the nucleus. Its function is as follows. Component of the SWM histone demethylase complex that specifically demethylates H3K9me2, a specific tag for epigenetic transcriptional activation, thereby acting as a corepressor. Has a role in regulating heterochromatin propagation and euchromatic transcription. The polypeptide is SWM histone demethylase complex subunit phf2 (phf2) (Schizosaccharomyces pombe (strain 972 / ATCC 24843) (Fission yeast)).